A 328-amino-acid polypeptide reads, in one-letter code: N-acetyl-gamma-glutamyl-phosphate reductase (328 aa).

Cysteine 143 is a catalytic residue.

It belongs to the NAGSA dehydrogenase family. Type 1 subfamily.

Its subcellular location is the cytoplasm. The catalysed reaction is N-acetyl-L-glutamate 5-semialdehyde + phosphate + NADP(+) = N-acetyl-L-glutamyl 5-phosphate + NADPH + H(+). It participates in amino-acid biosynthesis; L-arginine biosynthesis; N(2)-acetyl-L-ornithine from L-glutamate: step 3/4. In terms of biological role, catalyzes the NADPH-dependent reduction of N-acetyl-5-glutamyl phosphate to yield N-acetyl-L-glutamate 5-semialdehyde. This Methanosphaerula palustris (strain ATCC BAA-1556 / DSM 19958 / E1-9c) protein is N-acetyl-gamma-glutamyl-phosphate reductase.